Here is an 828-residue protein sequence, read N- to C-terminus: Deubiquitinase MYSM1 (828 aa).

Residues 1–12 show a composition bias toward acidic residues; the sequence is MAAEEADVDIEG. Residues 1–31 are disordered; that stretch reads MAAEEADVDIEGDVVAAAGAQPGSGENTASV. Ser-110 carries the phosphoserine modification. Residues 116-167 enclose the SANT domain; it reads SYSVKWTIEEKELFEQGLAKFGRRWTKISKLIGSRTVLQVKSYARQYFKNKV. A Glycyl lysine isopeptide (Lys-Gly) (interchain with G-Cter in SUMO2) cross-link involves residue Lys-187. At Ser-218 the chain carries Phosphoserine. Phosphothreonine is present on Thr-236. 3 positions are modified to phosphoserine: Ser-242, Ser-267, and Ser-340. Residues 372–470 enclose the SWIRM domain; it reads LKPPEQEIEI…FGCEQAVYNR (99 aa). An MPN domain is found at 577–709; it reads VKVASEALLI…PLPYSQITCL (133 aa). Zn(2+)-binding residues include His-656, His-658, and Asp-669. The short motif at 656–669 is the JAMM motif element; sequence HSHPAFDPNPSLRD. An LXXLL motif motif is present at residues 774-778; it reads LQKLL.

Belongs to the peptidase M67A family. MYSM1 subfamily. As to quaternary structure, component of a large chromatin remodeling complex, at least composed of MYSM1, PCAF, RBM10 and KIF11/TRIP5. Binds histones. Interacts with NFIL3; this interaction is critical for their correct recruitment to the ID2 locus during natural killer cell maturation.

The protein resides in the nucleus. Its subcellular location is the cytoplasm. Its function is as follows. Metalloprotease with deubiquitinase activity that plays important regulator roles in hematopoietic stem cell function, blood cell production and immune response. Participates in the normal programming of B-cell responses to antigen after the maturation process. Within the cytoplasm, plays critical roles in the repression of innate immunity and autoimmunity. Removes 'Lys-63'-linked polyubiquitins from TRAF3 and TRAF6 complexes. Attenuates NOD2-mediated inflammation and tissue injury by promoting 'Lys-63'-linked deubiquitination of RIPK2 component. Suppresses the CGAS-STING1 signaling pathway by cleaving STING1 'Lys-63'-linked ubiquitin chains. In the nucleus, acts as a hematopoietic transcription regulator derepressing a range of genes essential for normal stem cell differentiation including EBF1 and PAX5 in B-cells, ID2 in NK-cell progenitor or FLT3 in dendritic cell precursors. Deubiquitinates monoubiquitinated histone H2A, a specific tag for epigenetic transcriptional repression, leading to dissociation of histone H1 from the nucleosome. The sequence is that of Deubiquitinase MYSM1 (MYSM1) from Homo sapiens (Human).